Here is a 224-residue protein sequence, read N- to C-terminus: Heme response regulator HssR (224 aa).

Residues 3–116 (NCLIVDDDKK…ELLFRIKAVL (114 aa)) form the Response regulatory domain. A 4-aspartylphosphate modification is found at Asp52. The segment at residues 124–222 (DNELQLGNLI…VRGQGYRVDQ (99 aa)) is a DNA-binding region (ompR/PhoB-type).

In terms of processing, phosphorylated by HssS.

Its subcellular location is the cytoplasm. Member of the two-component regulatory system HssS/HssR involved in intracellular heme homeostasis and tempering of staphylococcal virulence. Phosphorylated HssR binds to a direct repeat sequence within hrtAB promoter and activates the expression of hrtAB, an efflux pump, in response to extracellular heme, hemin, hemoglobin or blood. The sequence is that of Heme response regulator HssR (hssR) from Staphylococcus epidermidis (strain ATCC 35984 / DSM 28319 / BCRC 17069 / CCUG 31568 / BM 3577 / RP62A).